The primary structure comprises 303 residues: ATP synthase gamma chain (303 aa).

It belongs to the ATPase gamma chain family. As to quaternary structure, F-type ATPases have 2 components, CF(1) - the catalytic core - and CF(0) - the membrane proton channel. CF(1) has five subunits: alpha(3), beta(3), gamma(1), delta(1), epsilon(1). CF(0) has three main subunits: a, b and c.

It localises to the cell inner membrane. Functionally, produces ATP from ADP in the presence of a proton gradient across the membrane. The gamma chain is believed to be important in regulating ATPase activity and the flow of protons through the CF(0) complex. This is ATP synthase gamma chain from Bartonella henselae (strain ATCC 49882 / DSM 28221 / CCUG 30454 / Houston 1) (Rochalimaea henselae).